The following is a 344-amino-acid chain: N-acetyl-gamma-glutamyl-phosphate reductase (344 aa).

Cys-150 is a catalytic residue.

The protein belongs to the NAGSA dehydrogenase family. Type 1 subfamily.

It localises to the cytoplasm. It catalyses the reaction N-acetyl-L-glutamate 5-semialdehyde + phosphate + NADP(+) = N-acetyl-L-glutamyl 5-phosphate + NADPH + H(+). The protein operates within amino-acid biosynthesis; L-arginine biosynthesis; N(2)-acetyl-L-ornithine from L-glutamate: step 3/4. Catalyzes the NADPH-dependent reduction of N-acetyl-5-glutamyl phosphate to yield N-acetyl-L-glutamate 5-semialdehyde. This is N-acetyl-gamma-glutamyl-phosphate reductase from Pseudomonas putida (strain W619).